The sequence spans 519 residues: Ent-kaurene oxidase (519 aa).

Topologically, residues 1-10 (MDTLLSLQAV) are chloroplast intermembrane. Residues 11-31 (PAAAAIGGPVVAIGGITLFFI) form a helical membrane-spanning segment. Residues 32–519 (REYVKDQRKK…PRLRDRVCVS (488 aa)) are Cytoplasmic-facing. Cys-458 serves as a coordination point for heme.

Belongs to the cytochrome P450 family. Heme serves as cofactor.

The protein resides in the plastid. It localises to the chloroplast outer membrane. The catalysed reaction is ent-kaur-16-ene + 3 reduced [NADPH--hemoprotein reductase] + 3 O2 = ent-kaur-16-en-19-oate + 3 oxidized [NADPH--hemoprotein reductase] + 4 H2O + 4 H(+). It participates in plant hormone biosynthesis; gibberellin biosynthesis. Functionally, catalyzes three successive oxidations of the 4-methyl group of ent-kaurene giving kaurenoic acid, a key step in gibberellins (GAs) biosynthesis. GAs, which are involved many processes, including stem elongation, play a central role in plant development. The polypeptide is Ent-kaurene oxidase (Salvia miltiorrhiza (Chinese sage)).